The sequence spans 506 residues: Proline--tRNA ligase (506 aa).

The protein belongs to the class-II aminoacyl-tRNA synthetase family. ProS type 3 subfamily. In terms of assembly, homodimer.

The protein localises to the cytoplasm. The catalysed reaction is tRNA(Pro) + L-proline + ATP = L-prolyl-tRNA(Pro) + AMP + diphosphate. Functionally, catalyzes the attachment of proline to tRNA(Pro) in a two-step reaction: proline is first activated by ATP to form Pro-AMP and then transferred to the acceptor end of tRNA(Pro). The chain is Proline--tRNA ligase from Akkermansia muciniphila (strain ATCC BAA-835 / DSM 22959 / JCM 33894 / BCRC 81048 / CCUG 64013 / CIP 107961 / Muc).